A 419-amino-acid chain; its full sequence is Putative zinc metalloprotease M6_Spy1682 (419 aa).

Histidine 18 is a Zn(2+) binding site. Glutamate 19 is a catalytic residue. Histidine 22 contacts Zn(2+). The next 4 membrane-spanning stretches (helical) occupy residues 169–191, 301–323, 343–365, and 392–411; these read LITN…ILLV, LAWS…FSLN, LESV…LIPI, and AYIT…AVTW. A PDZ domain is found at 175 to 274; the sequence is GPMNNFILGI…LKTVAVKPQK (100 aa).

Belongs to the peptidase M50B family. Zn(2+) is required as a cofactor.

The protein localises to the cell membrane. This is Putative zinc metalloprotease M6_Spy1682 from Streptococcus pyogenes serotype M6 (strain ATCC BAA-946 / MGAS10394).